Here is a 917-residue protein sequence, read N- to C-terminus: Sensor histidine kinase GacS (917 aa).

Helical transmembrane passes span 11–31 and 168–188; these read VLLLTLLPTSLMALVLGGYFT and SLFASLLLIAAGLAGTALLAV. Residues 192-244 form the HAMP domain; sequence RTINNPLTQIKQAVAQLKDGNLETRLPPLGSQELDELASGINRMASTLQNAQE. The 222-residue stretch at 291-512 folds into the Histidine kinase domain; the sequence is NMSHEIRTPL…EFWISLNLPK (222 aa). His-294 is modified (phosphohistidine; by autocatalysis). The region spanning 668 to 787 is the Response regulatory domain; that stretch reads RVLCVDDNPA…QLAQVVLKWT (120 aa). Residue Asp-717 is modified to 4-aspartylphosphate. Residues 824–917 form the HPt domain; the sequence is KADLAADMLA…RLAAEARTNA (94 aa). The residue at position 863 (His-863) is a Phosphohistidine.

In terms of processing, activation requires a sequential transfer of a phosphate group from a His in the primary transmitter domain, to an Asp in the receiver domain and to a His in the secondary transmitter domain.

Its subcellular location is the cell inner membrane. It catalyses the reaction ATP + protein L-histidine = ADP + protein N-phospho-L-histidine.. Functionally, member of the two-component regulatory system GacA/GacS which controls the expression of secondary metabolites and extracellular products. Activates GacA by phosphorylation. GacA acts (probably primarily) by activating expression of CsrA1 and CsrA2 antagonist small RNAs (sRNA) RsmX, RsmY and RsmZ which bind to and prevent translation repression by CsrA1 and CsrA2. Involved in the regulation of secondary metabolism and in the synthesis of the antifungal factors cyanide, 2,4-diacetylphloroglucinol and pyoluteorin. Exercises positive post-transcriptional control over the hcnABC and aprA genes; acts upstream of CsrA2 (rsmA). Controls expression of CsrA1 and CsrA2 antagonist sRNAs RsmX, RsmY and probably RsmZ. Probably controls expression of csrA1 (rsmE) and csrA2. This chain is Sensor histidine kinase GacS (gacS), found in Pseudomonas protegens (strain DSM 19095 / LMG 27888 / CFBP 6595 / CHA0).